We begin with the raw amino-acid sequence, 178 residues long: RNA pyrophosphohydrolase (178 aa).

Positions 18–171 (PYRPCVGLMV…KRKVYEQVVA (154 aa)) constitute a Nudix hydrolase domain. The Nudix box signature appears at 59 to 80 (GGIDKGEDPAQAALRELYEETG).

It belongs to the Nudix hydrolase family. RppH subfamily. A divalent metal cation serves as cofactor.

Accelerates the degradation of transcripts by removing pyrophosphate from the 5'-end of triphosphorylated RNA, leading to a more labile monophosphorylated state that can stimulate subsequent ribonuclease cleavage. The sequence is that of RNA pyrophosphohydrolase from Brucella melitensis biotype 2 (strain ATCC 23457).